A 218-amino-acid polypeptide reads, in one-letter code: Ribonuclease T (218 aa).

The Exonuclease domain maps to 24 to 198; that stretch reads VIIDVETAGF…YDAERTAELF (175 aa). Mg(2+) contacts are provided by Asp-27, Glu-29, His-185, and Asp-190. His-185 (proton donor/acceptor) is an active-site residue.

It belongs to the RNase T family. As to quaternary structure, homodimer. Mg(2+) is required as a cofactor.

Functionally, trims short 3' overhangs of a variety of RNA species, leaving a one or two nucleotide 3' overhang. Responsible for the end-turnover of tRNA: specifically removes the terminal AMP residue from uncharged tRNA (tRNA-C-C-A). Also appears to be involved in tRNA biosynthesis. The protein is Ribonuclease T of Histophilus somni (strain 129Pt) (Haemophilus somnus).